A 161-amino-acid chain; its full sequence is Type-1 angiotensin II receptor-associated protein (161 aa).

The Extracellular portion of the chain corresponds to 1-26 (MELPAVNLKVILLVHWLLTTWGCLVF). Residues 27–47 (SSSYAWGNFTILALGVWAVAQ) traverse the membrane as a helical segment. The Cytoplasmic segment spans residues 48–53 (RDSIDA). The helical transmembrane segment at 54-74 (IGMFLGGLVATIFLDIIYISI) threads the bilayer. The Extracellular portion of the chain corresponds to 75–86 (FYSSVATGDTGR). A helical transmembrane segment spans residues 87–107 (FGAGMAILSLLLKPFSCCLVY). Over 108–161 (HMHRERGGELPLRPDFFGPSQEHSAYQTIDSSSDAAADPFASLENKGQAVPRGY) the chain is Cytoplasmic. An interaction with AGTR1 region spans residues 110 to 122 (HRERGGELPLRPD). S127 is modified (phosphoserine). Position 135 is a phosphothreonine (T135). S138 carries the phosphoserine modification.

As to quaternary structure, interacts with RACK1, and with the C-terminal region of AGTR1. Ubiquitous but more abundant in kidney, testis and heart.

It localises to the endoplasmic reticulum membrane. Its subcellular location is the golgi apparatus membrane. The protein localises to the cytoplasmic vesicle membrane. Its function is as follows. Appears to be a negative regulator of type-1 angiotensin II receptor-mediated signaling by regulating receptor internalization as well as mechanism of receptor desensitization such as phosphorylation. Also induces a decrease in angiotensin II-stimulated transcriptional activity. May play a role of negative regulator in cardiomyocyte hypertrophy induced by angiotensin II through an inhibition of p38 mitogen-activated protein kinase pathway. This Mus musculus (Mouse) protein is Type-1 angiotensin II receptor-associated protein (Agtrap).